The sequence spans 898 residues: Chitin synthase 1 (898 aa).

The tract at residues 1–154 is disordered; sequence MDPRYGAQPM…PPQQGGGIQR (154 aa). The segment covering 9-21 has biased composition (pro residues); it reads PMPPRRSPSPGHP. Composition is skewed to polar residues over residues 64–75 and 136–146; these read DHLSLNAAQSVD and DVPSEQYQDPP. 5 helical membrane passes run 441 to 461, 540 to 560, 570 to 590, 616 to 636, and 651 to 671; these read SAFG…YVAL, RWLN…LDFL, FAFF…WFAI, ILGV…FVLS, and MCWF…FISV. The N-linked (GlcNAc...) asparagine glycan is linked to Asn685. Transmembrane regions (helical) follow at residues 697 to 717, 726 to 746, 825 to 845, and 870 to 890; these read MLII…LIML, FAQY…YAFC, GVVL…LSSA, and IVLW…MWFL.

The protein belongs to the chitin synthase family. Class I subfamily.

The protein localises to the cell membrane. The enzyme catalyses [(1-&gt;4)-N-acetyl-beta-D-glucosaminyl](n) + UDP-N-acetyl-alpha-D-glucosamine = [(1-&gt;4)-N-acetyl-beta-D-glucosaminyl](n+1) + UDP + H(+). Functionally, polymerizes chitin, a structural polymer of the cell wall and septum, by transferring the sugar moiety of UDP-GlcNAc to the non-reducing end of the growing chitin polymer. Shows additive effects in septum formation with CHS2, CHS3A, CHS4, CHS5, CHS6 and CHS7. Regulates mycelial growth and conidiation. Involved in virulence and mediates mycotoxin deoxinivalenol (DON) biosynthesis via the regulation of the expression of TRI4, TRI5 and TRI6. In Gibberella zeae (strain ATCC MYA-4620 / CBS 123657 / FGSC 9075 / NRRL 31084 / PH-1) (Wheat head blight fungus), this protein is Chitin synthase 1.